Consider the following 62-residue polypeptide: Photosystem II reaction center protein Z (62 aa).

2 helical membrane-spanning segments follow: residues 8-28 and 41-61; these read AVFA…VVFA and FSGT…NSLI.

It belongs to the PsbZ family. As to quaternary structure, PSII is composed of 1 copy each of membrane proteins PsbA, PsbB, PsbC, PsbD, PsbE, PsbF, PsbH, PsbI, PsbJ, PsbK, PsbL, PsbM, PsbT, PsbY, PsbZ, Psb30/Ycf12, at least 3 peripheral proteins of the oxygen-evolving complex and a large number of cofactors. It forms dimeric complexes.

The protein localises to the plastid. The protein resides in the chloroplast thylakoid membrane. May control the interaction of photosystem II (PSII) cores with the light-harvesting antenna, regulates electron flow through the 2 photosystem reaction centers. PSII is a light-driven water plastoquinone oxidoreductase, using light energy to abstract electrons from H(2)O, generating a proton gradient subsequently used for ATP formation. In Coffea arabica (Arabian coffee), this protein is Photosystem II reaction center protein Z.